The sequence spans 244 residues: Protein DCG1 (244 aa).

The protein belongs to the HyuE racemase family.

This Saccharomyces cerevisiae (strain ATCC 204508 / S288c) (Baker's yeast) protein is Protein DCG1 (DCG1).